A 136-amino-acid polypeptide reads, in one-letter code: Urease subunit beta (136 aa).

The interval 113–136 (NDEYAGVFGDNGAENVNKKGRKRS) is disordered.

It belongs to the urease beta subunit family. In terms of assembly, heterotrimer of UreA (gamma), UreB (beta) and UreC (alpha) subunits. Three heterotrimers associate to form the active enzyme.

The protein localises to the cytoplasm. The enzyme catalyses urea + 2 H2O + H(+) = hydrogencarbonate + 2 NH4(+). Its pathway is nitrogen metabolism; urea degradation; CO(2) and NH(3) from urea (urease route): step 1/1. The protein is Urease subunit beta of Staphylococcus aureus (strain Newman).